A 165-amino-acid polypeptide reads, in one-letter code: uncharacterized protein (165 aa).

A helical membrane pass occupies residues 20-40; the sequence is INLIASIVLWLLFVITVIGTF. Asn-51 is a glycosylation site (N-linked (GlcNAc...) asparagine; by host). A helical transmembrane segment spans residues 97-117; sequence VGIIVILIFMLMIIMNGFYQM.

It is found in the membrane. This is an uncharacterized protein from Acanthamoeba polyphaga (Amoeba).